A 456-amino-acid chain; its full sequence is Enolase (456 aa).

Gln177 contacts (2R)-2-phosphoglycerate. Glu219 functions as the Proton donor in the catalytic mechanism. Positions 256, 310, and 337 each coordinate Mg(2+). Residues Lys362, Arg391, Ser392, and Lys413 each contribute to the (2R)-2-phosphoglycerate site. Lys362 serves as the catalytic Proton acceptor.

The protein belongs to the enolase family. As to quaternary structure, homodimer. The cofactor is Mg(2+).

It localises to the cytoplasm. The protein resides in the secreted. Its subcellular location is the cell surface. It carries out the reaction (2R)-2-phosphoglycerate = phosphoenolpyruvate + H2O. Its pathway is carbohydrate degradation; glycolysis; pyruvate from D-glyceraldehyde 3-phosphate: step 4/5. In terms of biological role, catalyzes the reversible conversion of 2-phosphoglycerate (2-PG) into phosphoenolpyruvate (PEP). It is essential for the degradation of carbohydrates via glycolysis. 'Moonlights' as a plasminogen receptor. Binds plasminogen, but no fibronectin binding was observed. Plasminogen binding increases bacterial adherence to host cells; plasmin activity leads to degradation of host extracellular matrix proteins, facilitating bacterial dissemination and disease spread. The polypeptide is Enolase (Mycoplasma pneumoniae (strain ATCC 29342 / M129 / Subtype 1) (Mycoplasmoides pneumoniae)).